A 607-amino-acid chain; its full sequence is Glutamine--fructose-6-phosphate aminotransferase [isomerizing] (607 aa).

Residue Cys2 is the Nucleophile; for GATase activity of the active site. The region spanning 2–217 (CGIIGILGKR…DGDWAVLTRE (216 aa)) is the Glutamine amidotransferase type-2 domain. SIS domains follow at residues 277 to 422 (TVRS…QRGF) and 455 to 597 (ICRN…VDQP). Lys602 (for Fru-6P isomerization activity) is an active-site residue.

In terms of assembly, homodimer.

The protein localises to the cytoplasm. The catalysed reaction is D-fructose 6-phosphate + L-glutamine = D-glucosamine 6-phosphate + L-glutamate. Catalyzes the first step in hexosamine metabolism, converting fructose-6P into glucosamine-6P using glutamine as a nitrogen source. This chain is Glutamine--fructose-6-phosphate aminotransferase [isomerizing], found in Bartonella henselae (strain ATCC 49882 / DSM 28221 / CCUG 30454 / Houston 1) (Rochalimaea henselae).